Reading from the N-terminus, the 94-residue chain is MYEIEIMPSLDKILQKLSKRDKKKLKAILKKMEEITQNPHHYKNLRHPLNDFKRVHIDKSFVLVFTVDENNKTVIFVDFDHHDNIYKKKKLFKD.

The protein belongs to the RelE toxin family.

In terms of biological role, toxic component of a type II toxin-antitoxin (TA) system. Its cognate antitoxin is RelB4 (Potential). This chain is Putative toxin RelE4 (relE4), found in Methanocaldococcus jannaschii (strain ATCC 43067 / DSM 2661 / JAL-1 / JCM 10045 / NBRC 100440) (Methanococcus jannaschii).